The chain runs to 442 residues: tRNA-2-methylthio-N(6)-dimethylallyladenosine synthase (442 aa).

The MTTase N-terminal domain occupies 3–118 (KKVFIKTFGC…LPELLNARAA (116 aa)). Residues cysteine 12, cysteine 49, cysteine 81, cysteine 155, cysteine 159, and cysteine 162 each contribute to the [4Fe-4S] cluster site. In terms of domain architecture, Radical SAM core spans 141 to 374 (RVEGSSAFVS…QAVINNNIKD (234 aa)). The 64-residue stretch at 377–440 (DERVGTVQRL…TFTLRGEVVV (64 aa)) folds into the TRAM domain.

Belongs to the methylthiotransferase family. MiaB subfamily. Monomer. [4Fe-4S] cluster serves as cofactor.

It localises to the cytoplasm. It carries out the reaction N(6)-dimethylallyladenosine(37) in tRNA + (sulfur carrier)-SH + AH2 + 2 S-adenosyl-L-methionine = 2-methylsulfanyl-N(6)-dimethylallyladenosine(37) in tRNA + (sulfur carrier)-H + 5'-deoxyadenosine + L-methionine + A + S-adenosyl-L-homocysteine + 2 H(+). Functionally, catalyzes the methylthiolation of N6-(dimethylallyl)adenosine (i(6)A), leading to the formation of 2-methylthio-N6-(dimethylallyl)adenosine (ms(2)i(6)A) at position 37 in tRNAs that read codons beginning with uridine. In Delftia acidovorans (strain DSM 14801 / SPH-1), this protein is tRNA-2-methylthio-N(6)-dimethylallyladenosine synthase.